Consider the following 222-residue polypeptide: uncharacterized protein (222 aa).

Belongs to the ycf73 family.

The protein localises to the plastid. The protein resides in the chloroplast. This is an uncharacterized protein from Oryza nivara (Indian wild rice).